Here is a 196-residue protein sequence, read N- to C-terminus: Peptidoglycan recognition protein (196 aa).

The signal sequence occupies residues 1-23; it reads MARLHSAVVLALALSSLLTEIAA. Disulfide bonds link Cys-25/Cys-147 and Cys-61/Cys-67. An N-acetylmuramoyl-L-alanine amidase domain is found at 46-173; the sequence is RPVSLVIVQH…RQLIASESPG (128 aa).

It belongs to the N-acetylmuramoyl-L-alanine amidase 2 family. Monomer. In terms of tissue distribution, constitutively expressed in fat body, epithelial cells and hemocytes. Not detected in Malpighian tubules, silk gland or midgut.

In terms of biological role, binds specifically to peptidoglycan and triggers the propenoloxidase cascade which is an important insect defense mechanism. The sequence is that of Peptidoglycan recognition protein from Bombyx mori (Silk moth).